Here is a 465-residue protein sequence, read N- to C-terminus: Polyadenylation factor subunit 2 (465 aa).

Residues 1-20 (MDGHNQNQYQNQNQIQQSQQ) show a composition bias toward low complexity. The interval 1-26 (MDGHNQNQYQNQNQIQQSQQPPLKKY) is disordered. WD repeat units follow at residues 133 to 163 (AHDS…KIWQ), 175 to 205 (AHTE…KIWN), 217 to 247 (GHHW…KLWD), 259 to 290 (KFKH…RVFD), and 348 to 378 (AHDK…RFWT). Positions 417-465 (EFGAAPPPPATLEPHALPNMNGFINKKPRQEIPGIDSNIKSSTLPGLSI) are disordered. Residues 454–465 (NIKSSTLPGLSI) show a composition bias toward polar residues.

In terms of assembly, component of the cleavage and polyadenylation factor (CPF) complex, which is composed of at least PTI1, SYC1, SSU72, GLC7, MPE1, REF2, PFS2, PTA1, YSH1/BRR5, SWD2, CFT2/YDH1, YTH1, CFT1/YHH1, FIP1 and PAP1. Interacts with YSH1/BRR5, FIP1 and RNA14.

The protein localises to the nucleus. Integral and essential component of the cleavage and polyadenylation factor (CPF) complex, which plays a key role in polyadenylation-dependent pre-mRNA 3'-end formation and cooperates with cleavage factors including the CFIA complex and NAB4/CFIB. May bridge the CPF and CFIA complexes. In Saccharomyces cerevisiae (strain ATCC 204508 / S288c) (Baker's yeast), this protein is Polyadenylation factor subunit 2 (PFS2).